Consider the following 164-residue polypeptide: 17.8 kDa heat shock protein (164 aa).

The region spanning 20–154 (VVAGEARPPM…HAGNGKAAGD (135 aa)) is the sHSP domain. The segment at 68–93 (GEHEDANNAAKAGKASGEEEEENDGV) is disordered.

The protein belongs to the small heat shock protein (HSP20) family. May form oligomeric structures.

The protein localises to the cytoplasm. The protein is 17.8 kDa heat shock protein (HSP17.8) of Oryza sativa subsp. japonica (Rice).